We begin with the raw amino-acid sequence, 244 residues long: Small ribosomal subunit protein uS3 (244 aa).

Positions 38-106 (IRKYLNARLA…EVQINIFEVK (69 aa)) constitute a KH type-2 domain. A compositionally biased stretch (basic and acidic residues) spans 222–235 (TGRRNDNAGGNRDK). The disordered stretch occupies residues 222 to 244 (TGRRNDNAGGNRDKNFKRKRANR).

The protein belongs to the universal ribosomal protein uS3 family. In terms of assembly, part of the 30S ribosomal subunit. Forms a tight complex with proteins S10 and S14.

Binds the lower part of the 30S subunit head. Binds mRNA in the 70S ribosome, positioning it for translation. The chain is Small ribosomal subunit protein uS3 from Parabacteroides distasonis (strain ATCC 8503 / DSM 20701 / CIP 104284 / JCM 5825 / NCTC 11152).